The following is a 176-amino-acid chain: Disulfide bond formation protein B (176 aa).

Topologically, residues 1–14 (MLRFLNQCSQGRGA) are cytoplasmic. A helical membrane pass occupies residues 15–31 (WLLMAFTALALELTALW). Residues 32-49 (FQHVMLLKPCVLCIYERC) lie on the Periplasmic side of the membrane. A disulfide bridge connects residues C41 and C44. The chain crosses the membrane as a helical span at residues 50 to 65 (ALFGVLGAALIGAIAP). The Cytoplasmic segment spans residues 66 to 71 (KTPLRY). Residues 72–89 (VAMVIWLYSAFRGVQLTY) traverse the membrane as a helical segment. The Periplasmic portion of the chain corresponds to 90-144 (EHTMLQLYPSPFATCDFMVRFPEWLPLDKWVPQVFVASGDCAERQWDFLGLEMPQ). A disulfide bridge links C104 with C130. Residues 145-163 (WLLGIFIAYLIVAVLVMIS) traverse the membrane as a helical segment. Topologically, residues 164–176 (QPFKAKKRDLFGR) are cytoplasmic.

It belongs to the DsbB family.

Its subcellular location is the cell inner membrane. In terms of biological role, required for disulfide bond formation in some periplasmic proteins. Acts by oxidizing the DsbA protein. This chain is Disulfide bond formation protein B, found in Shigella sonnei (strain Ss046).